Here is a 162-residue protein sequence, read N- to C-terminus: D-aminoacyl-tRNA deacylase (162 aa).

Residues 145 to 146 (GP) carry the Gly-cisPro motif, important for rejection of L-amino acids motif.

The protein belongs to the DTD family. As to quaternary structure, homodimer.

It is found in the cytoplasm. The catalysed reaction is glycyl-tRNA(Ala) + H2O = tRNA(Ala) + glycine + H(+). It catalyses the reaction a D-aminoacyl-tRNA + H2O = a tRNA + a D-alpha-amino acid + H(+). Its function is as follows. An aminoacyl-tRNA editing enzyme that deacylates mischarged D-aminoacyl-tRNAs. Also deacylates mischarged glycyl-tRNA(Ala), protecting cells against glycine mischarging by AlaRS. Acts via tRNA-based rather than protein-based catalysis; rejects L-amino acids rather than detecting D-amino acids in the active site. By recycling D-aminoacyl-tRNA to D-amino acids and free tRNA molecules, this enzyme counteracts the toxicity associated with the formation of D-aminoacyl-tRNA entities in vivo and helps enforce protein L-homochirality. This chain is D-aminoacyl-tRNA deacylase, found in Bifidobacterium longum (strain NCC 2705).